The sequence spans 541 residues: Periplasmic oligopeptide-binding protein OppA (541 aa).

Residues 1-20 (MQHKLLFSAIALALSYSAQA) form the signal peptide.

Belongs to the bacterial solute-binding protein 5 family. In terms of assembly, the complex is composed of two ATP-binding proteins (OppD and OppF), two transmembrane proteins (OppB and OppC) and a solute-binding protein (OppA).

Its subcellular location is the periplasm. Its function is as follows. Part of the ABC transporter complex OppABCDF involved in the uptake of oligopeptides. Plays an important nutritional role. Binds peptides containing from two to five amino acid residues. The chain is Periplasmic oligopeptide-binding protein OppA (oppA) from Haemophilus influenzae (strain ATCC 51907 / DSM 11121 / KW20 / Rd).